The sequence spans 508 residues: Bifunctional purine biosynthesis protein PurH (508 aa).

Residues 1–145 (MAKKALISVS…KNYKYVTILV (145 aa)) form the MGS-like domain.

This sequence belongs to the PurH family.

The catalysed reaction is (6R)-10-formyltetrahydrofolate + 5-amino-1-(5-phospho-beta-D-ribosyl)imidazole-4-carboxamide = 5-formamido-1-(5-phospho-D-ribosyl)imidazole-4-carboxamide + (6S)-5,6,7,8-tetrahydrofolate. It catalyses the reaction IMP + H2O = 5-formamido-1-(5-phospho-D-ribosyl)imidazole-4-carboxamide. The protein operates within purine metabolism; IMP biosynthesis via de novo pathway; 5-formamido-1-(5-phospho-D-ribosyl)imidazole-4-carboxamide from 5-amino-1-(5-phospho-D-ribosyl)imidazole-4-carboxamide (10-formyl THF route): step 1/1. It functions in the pathway purine metabolism; IMP biosynthesis via de novo pathway; IMP from 5-formamido-1-(5-phospho-D-ribosyl)imidazole-4-carboxamide: step 1/1. The chain is Bifunctional purine biosynthesis protein PurH from Thermoanaerobacter sp. (strain X514).